An 89-amino-acid polypeptide reads, in one-letter code: Small ribosomal subunit protein uS15 (89 aa).

This sequence belongs to the universal ribosomal protein uS15 family. Part of the 30S ribosomal subunit. Forms a bridge to the 50S subunit in the 70S ribosome, contacting the 23S rRNA.

Functionally, one of the primary rRNA binding proteins, it binds directly to 16S rRNA where it helps nucleate assembly of the platform of the 30S subunit by binding and bridging several RNA helices of the 16S rRNA. Its function is as follows. Forms an intersubunit bridge (bridge B4) with the 23S rRNA of the 50S subunit in the ribosome. The sequence is that of Small ribosomal subunit protein uS15 from Maridesulfovibrio salexigens (strain ATCC 14822 / DSM 2638 / NCIMB 8403 / VKM B-1763) (Desulfovibrio salexigens).